Here is a 293-residue protein sequence, read N- to C-terminus: Protein Pat (293 aa).

One can recognise a BEN domain in the interval 187–287 (LPDIILNPLD…LLLRTRQDRA (101 aa)).

In terms of assembly, interacts with poc1b. As to expression, an mRNA and protein component of germ plasm and primordial germ cells (PGCs) throughout oogenesis and early development, being first localized to the granulo-fibrillar material (GFM) of the mitochondrial cloud in stage I and II oocytes and to the periphery of mature germinal granules both in oocytes and in embryos. Shows some somatic expression including the ectodermal cells of tailbud embryos. In adults, only expressed in ovaries.

It is found in the cytoplasm. The protein resides in the nucleus. Its function is as follows. Probably plays a role in germ plasm formation, positioning and maintenance. The protein is Protein Pat of Xenopus laevis (African clawed frog).